Consider the following 253-residue polypeptide: MLIEQFICREDNFGVLIHDETSGYTAAIDAPESNAIQNALKRRNWTLQTIFLTHHHHDHVEALAELKQIYKAIVIGPEAEKEKISHIDQTLKPDESFLFGTHTILALSTPGHTLGALSYYFPQENLLFAGDTLFSLGCGRLFEGTPAQMLNSLKKLRQLPDETLLYCGHEYTKSNALFALTLDPYNQKLQQRAEDVFLLRAKNAMTLPVTLGQEKKNNPFLRWDNRTLRKTLRMEKETDEEVFAEIRKRKDNF.

Zn(2+) is bound by residues histidine 54, histidine 56, aspartate 58, histidine 59, histidine 112, aspartate 131, and histidine 169.

The protein belongs to the metallo-beta-lactamase superfamily. Glyoxalase II family. Monomer. Requires Zn(2+) as cofactor.

It carries out the reaction an S-(2-hydroxyacyl)glutathione + H2O = a 2-hydroxy carboxylate + glutathione + H(+). It participates in secondary metabolite metabolism; methylglyoxal degradation; (R)-lactate from methylglyoxal: step 2/2. Thiolesterase that catalyzes the hydrolysis of S-D-lactoyl-glutathione to form glutathione and D-lactic acid. This is Hydroxyacylglutathione hydrolase from Bartonella henselae (strain ATCC 49882 / DSM 28221 / CCUG 30454 / Houston 1) (Rochalimaea henselae).